The following is a 1124-amino-acid chain: Phytochrome type A (1124 aa).

A compositionally biased stretch (low complexity) spans 1–19 (MSTTRPSQSSNNSGRSRNS). Residues 1–21 (MSTTRPSQSSNNSGRSRNSAR) are disordered. Positions 218 to 401 (SMERLCDTMV…VFAIHVNKEI (184 aa)) constitute a GAF domain. Residue C323 coordinates phytochromobilin. PAS domains follow at residues 617–687 (VTSE…LQGE) and 750–821 (DYKA…VNFG). The 220-residue stretch at 901-1120 (YMKRQIRNPL…ILSVELAAAH (220 aa)) folds into the Histidine kinase domain.

It belongs to the phytochrome family. As to quaternary structure, homodimer. Contains one covalently linked phytochromobilin chromophore.

Regulatory photoreceptor which exists in two forms that are reversibly interconvertible by light: the Pr form that absorbs maximally in the red region of the spectrum and the Pfr form that absorbs maximally in the far-red region. Photoconversion of Pr to Pfr induces an array of morphogenic responses, whereas reconversion of Pfr to Pr cancels the induction of those responses. Pfr controls the expression of a number of nuclear genes including those encoding the small subunit of ribulose-bisphosphate carboxylase, chlorophyll A/B binding protein, protochlorophyllide reductase, rRNA, etc. It also controls the expression of its own gene(s) in a negative feedback fashion. In Lathyrus sativus (White vetchling), this protein is Phytochrome type A (PHYA).